Consider the following 525-residue polypeptide: Anti-silencing protein 2 (525 aa).

The segment at 467–525 (LPRVPTDSPQLPSKDKSQETAKKDDRPKLVANEPVTLDTSTPPVAQSLADSKHCSGLHK) is disordered. Residues 479-494 (SKDKSQETAKKDDRPK) show a composition bias toward basic and acidic residues.

Functionally, derepression of silent mating type loci when overexpressed. The sequence is that of Anti-silencing protein 2 (ASF2) from Saccharomyces cerevisiae (strain ATCC 204508 / S288c) (Baker's yeast).